We begin with the raw amino-acid sequence, 216 residues long: Phosphoribosylaminoimidazole-succinocarboxamide synthase (216 aa).

This sequence belongs to the SAICAR synthetase family.

It carries out the reaction 5-amino-1-(5-phospho-D-ribosyl)imidazole-4-carboxylate + L-aspartate + ATP = (2S)-2-[5-amino-1-(5-phospho-beta-D-ribosyl)imidazole-4-carboxamido]succinate + ADP + phosphate + 2 H(+). It functions in the pathway purine metabolism; IMP biosynthesis via de novo pathway; 5-amino-1-(5-phospho-D-ribosyl)imidazole-4-carboxamide from 5-amino-1-(5-phospho-D-ribosyl)imidazole-4-carboxylate: step 1/2. This is Phosphoribosylaminoimidazole-succinocarboxamide synthase (purC) from Aquifex aeolicus (strain VF5).